We begin with the raw amino-acid sequence, 435 residues long: uncharacterized protein (435 aa).

A run of 9 helical transmembrane segments spans residues 40-60 (LVSTWLVVWGIWHVYFVEAVF), 103-123 (VLWTSITVWLIALAVVVWLIL), 133-153 (IMLALLVPVLPFAFSYAIYNP), 195-215 (LIHEAIPLEFALGAVLAIIVL), 226-246 (ICTALAIGPGTVSVLLLAVVG), 313-333 (VAVVGFRALFGAFLLGLLFFV), 358-378 (LALPVLASALLVPLFITAVDW), 381-401 (WWVMITLDVAIVYILYAIDRP), and 414-434 (VFVCVVLVLAVIPTGSANNIG).

Its subcellular location is the cell membrane. This is an uncharacterized protein from Mycobacterium bovis (strain ATCC BAA-935 / AF2122/97).